The sequence spans 291 residues: Ribosomal protein L11 methyltransferase (291 aa).

Residues Thr-136, Gly-159, Asp-181, and Asn-228 each coordinate S-adenosyl-L-methionine.

The protein belongs to the methyltransferase superfamily. PrmA family.

Its subcellular location is the cytoplasm. It catalyses the reaction L-lysyl-[protein] + 3 S-adenosyl-L-methionine = N(6),N(6),N(6)-trimethyl-L-lysyl-[protein] + 3 S-adenosyl-L-homocysteine + 3 H(+). Its function is as follows. Methylates ribosomal protein L11. The sequence is that of Ribosomal protein L11 methyltransferase from Rhizobium meliloti (strain 1021) (Ensifer meliloti).